We begin with the raw amino-acid sequence, 411 residues long: LIM domain-binding protein 1 (411 aa).

An N-acetylserine modification is found at Ser-2. Residue Thr-61 is modified to Phosphothreonine. A phosphoserine mark is found at Ser-265 and Ser-302. Disordered stretches follow at residues 284 to 330 (PPAE…TFAL) and 367 to 411 (DAAN…QASQ). A compositionally biased stretch (low complexity) spans 302-318 (SGGSTMSSGGGNTNNSN). The 40-residue stretch at 336–375 (DVMVVGEPTLMGGEFGDEDERLITRLENTQFDAANGIDDE) folds into the LIM interaction domain (LID) domain.

Belongs to the LDB family. Interacts with ESR1. Forms homodimers and heterodimers. Interacts with and activates LHX1/LIM1. Interacts with the LIM domains of ISL1 and LMO2. Can assemble in a complex with LMO2 and TAL1/SCL but does not interact with TAL1/SCL directly. Strongly interacts with the LIM2 domain of LMX1A and more weakly with the LIM1 domain. Homodimerization is not required for, and does not effect, LMX1A-binding. Component of a nuclear TAL-1 complex composed at least of CBFA2T3, LDB1, TAL1 and TCF3. Interacts with LHX6 and LHX9. At neuronal promoters, forms a complex with LHX3 involved in the specification of interneurons, in motor neurons, it is displaced by ISL1 to form a ternary complex in which ISL1 contacts both LHX3 and LDB1. Interacts with SLK; leading to negatively regulate SLK kinase activity. Interacts with YWHAZ. Interacts with PRDM1/BLIMP1. Interacts with LMO4. Interacts with RLIM/RNF12; the interaction inhibits the ubiquitination of LMO proteins. Ubiquitinated by RLIM/RNF12, leading to its degradation by the proteasome. As to expression, expressed in multiple adult tissues including heart, brain, liver, kidney, testis, lung and muscle, with expression highest in the pituitary gland and skin.

The protein resides in the nucleus. In terms of biological role, binds to the LIM domain of a wide variety of LIM domain-containing transcription factors. May regulate the transcriptional activity of LIM-containing proteins by determining specific partner interactions. Plays a role in the development of interneurons and motor neurons in cooperation with LHX3 and ISL1. Acts synergistically with LHX1/LIM1 in axis formation and activation of gene expression. Acts with LMO2 in the regulation of red blood cell development, maintaining erythroid precursors in an immature state. The sequence is that of LIM domain-binding protein 1 (Ldb1) from Mus musculus (Mouse).